The chain runs to 421 residues: Alpha-tubulin N-acetyltransferase 1 (421 aa).

Residues 1–190 (MEFPFDVDAL…NNFVIFEGFF (190 aa)) form the N-acetyltransferase domain. An N6-acetyllysine; by autocatalysis modification is found at Lys-56. 124-137 (FYIHESVQRHGHGR) contacts acetyl-CoA. Lys-146 is subject to N6-acetyllysine; by autocatalysis. 160 to 169 (SQKLLKFLNK) serves as a coordination point for acetyl-CoA. Positions 196-235 (PPAPSLRATRHSRAAAVDPTPAAPARKLPPKRAEGDIKPY) are disordered. Over residues 209 to 221 (AAAVDPTPAAPAR) the composition is skewed to low complexity. Positions 226–235 (KRAEGDIKPY) are enriched in basic and acidic residues. N6-acetyllysine; by autocatalysis occurs at positions 233 and 244. The disordered stretch occupies residues 252–284 (PLNRAPRRATPPAHPPPRSSSLGNSPERGPLRP). Phosphoserine occurs at positions 272 and 276. The residue at position 305 (Arg-305) is an Asymmetric dimethylarginine. A disordered region spans residues 306–402 (LLLAADPGGS…PAQSWTVGGD (97 aa)). Ser-315 is subject to Phosphoserine. Arg-323 carries the omega-N-methylarginine modification. Polar residues predominate over residues 342-354 (VNSSSPNTGNQDS). The span at 355-367 (KQGEQETKNRSAS) shows a compositional bias: basic and acidic residues.

This sequence belongs to the acetyltransferase ATAT1 family. In terms of assembly, component of the BBSome complex. Interacts with AP2 alpha-adaptins, including AP2A2, but not with AP1 gamma-adaptin (AP1G1/AP1G2); this interaction is required for efficient alpha-tubulin acetylation, hence clathrin-coated pits are sites of microtubule acetylation. In terms of processing, autoacetylation strongly increases tubulin acetylation.

The protein resides in the cytoplasm. It localises to the membrane. The protein localises to the clathrin-coated pit. Its subcellular location is the cell junction. It is found in the focal adhesion. The protein resides in the cell projection. It localises to the axon. The protein localises to the cytoskeleton. Its subcellular location is the spindle. It catalyses the reaction L-lysyl-[alpha-tubulin] + acetyl-CoA = N(6)-acetyl-L-lysyl-[alpha-tubulin] + CoA + H(+). Specifically acetylates 'Lys-40' in alpha-tubulin on the lumenal side of microtubules. Promotes microtubule destabilization and accelerates microtubule dynamics; this activity may be independent of acetylation activity. Acetylates alpha-tubulin with a slow enzymatic rate, due to a catalytic site that is not optimized for acetyl transfer. Enters the microtubule through each end and diffuses quickly throughout the lumen of microtubules. Acetylates only long/old microtubules because of its slow acetylation rate since it does not have time to act on dynamically unstable microtubules before the enzyme is released. Required for normal sperm flagellar function. Promotes directional cell locomotion and chemotaxis, through AP2A2-dependent acetylation of alpha-tubulin at clathrin-coated pits that are concentrated at the leading edge of migrating cells. May facilitate primary cilium assembly. In Homo sapiens (Human), this protein is Alpha-tubulin N-acetyltransferase 1.